We begin with the raw amino-acid sequence, 72 residues long: DNA-directed RNA polymerase subunit omega (72 aa).

Belongs to the RNA polymerase subunit omega family. The RNAP catalytic core consists of 2 alpha, 1 beta, 1 beta' and 1 omega subunit. When a sigma factor is associated with the core the holoenzyme is formed, which can initiate transcription.

It carries out the reaction RNA(n) + a ribonucleoside 5'-triphosphate = RNA(n+1) + diphosphate. In terms of biological role, promotes RNA polymerase assembly. Latches the N- and C-terminal regions of the beta' subunit thereby facilitating its interaction with the beta and alpha subunits. This is DNA-directed RNA polymerase subunit omega from Clostridium botulinum (strain Loch Maree / Type A3).